Consider the following 213-residue polypeptide: Redox-sensing transcriptional repressor Rex (213 aa).

Residues 18 to 57 (LYYRFLKNLHASGKQRVSSAELSEAVKVDPATIRRDFSYF) constitute a DNA-binding region (H-T-H motif). 92 to 97 (GVGNLG) lines the NAD(+) pocket.

It belongs to the transcriptional regulatory Rex family. As to quaternary structure, homodimer.

The protein localises to the cytoplasm. In terms of biological role, modulates transcription in response to changes in cellular NADH/NAD(+) redox state. This is Redox-sensing transcriptional repressor Rex from Geobacillus kaustophilus (strain HTA426).